The chain runs to 365 residues: Ribosomal RNA large subunit methyltransferase F (365 aa).

The segment at M1 to R49 is disordered. Basic and acidic residues predominate over residues A33–R49.

The protein belongs to the methyltransferase superfamily. METTL16/RlmF family.

The protein localises to the cytoplasm. The catalysed reaction is adenosine(1618) in 23S rRNA + S-adenosyl-L-methionine = N(6)-methyladenosine(1618) in 23S rRNA + S-adenosyl-L-homocysteine + H(+). Its function is as follows. Specifically methylates the adenine in position 1618 of 23S rRNA. This is Ribosomal RNA large subunit methyltransferase F from Shewanella baltica (strain OS185).